Here is a 125-residue protein sequence, read N- to C-terminus: Protein ApaG (125 aa).

In terms of domain architecture, ApaG spans 3 to 125 (TAVTEGIEVT…FPLVVPGTLN (123 aa)).

In Anaeromyxobacter sp. (strain K), this protein is Protein ApaG.